Reading from the N-terminus, the 524-residue chain is Glutamyl-tRNA(Gln) amidotransferase subunit A (524 aa).

Active-site charge relay system residues include lysine 109 and serine 184. Residue serine 208 is the Acyl-ester intermediate of the active site.

This sequence belongs to the amidase family. GatA subfamily. As to quaternary structure, heterotrimer of A, B and C subunits.

The enzyme catalyses L-glutamyl-tRNA(Gln) + L-glutamine + ATP + H2O = L-glutaminyl-tRNA(Gln) + L-glutamate + ADP + phosphate + H(+). Allows the formation of correctly charged Gln-tRNA(Gln) through the transamidation of misacylated Glu-tRNA(Gln) in organisms which lack glutaminyl-tRNA synthetase. The reaction takes place in the presence of glutamine and ATP through an activated gamma-phospho-Glu-tRNA(Gln). The polypeptide is Glutamyl-tRNA(Gln) amidotransferase subunit A (Tropheryma whipplei (strain Twist) (Whipple's bacillus)).